The primary structure comprises 450 residues: MREVISLNVGQAGCQIANSCWELYCLEHGIQPDGYLTEERKAAEDDDGFSTFFSETGNGKYVPRTIYADLEPNVVDEVRTGTYRSLFHPELMITGKEDASNNYARGHYTVGKELIDQVLDKVRHVADNCSGLQGFLVFHSFGGGTGSGFGALLMERLSVDYGKKCKLEFCVYPAPQVATSVVEPYNSILTTHTTLEHSDCSFMVDNEAIYDICRRNLGIERPNYENLNRLIAQVVSSITASLRFDGSLNVDLNEFQTNLVPYPRIHFPLVAYAPIVSAAKAAHEANSVQEISMSCFEPNSQMVKCDPRNGKYMATCLLYRGDVVPKDVHQAVATLKTKRTIQFVDWCPTGFKIGICYQPPQNVPNGDLAKVNRAVCMLSNTTAIAEAWSALSHKFDLMYSKRAFVHWYVGEGMEEGEFSEAREDLAALERDYEEVAADSAEGDEGGEAEY.

GTP contacts are provided by glutamine 11, glutamate 71, serine 140, glycine 144, threonine 145, threonine 179, asparagine 206, and asparagine 228. Glutamate 71 is a Mg(2+) binding site. Residue glutamate 254 is part of the active site.

It belongs to the tubulin family. Dimer of alpha and beta chains. A typical microtubule is a hollow water-filled tube with an outer diameter of 25 nm and an inner diameter of 15 nM. Alpha-beta heterodimers associate head-to-tail to form protofilaments running lengthwise along the microtubule wall with the beta-tubulin subunit facing the microtubule plus end conferring a structural polarity. Microtubules usually have 13 protofilaments but different protofilament numbers can be found in some organisms and specialized cells. It depends on Mg(2+) as a cofactor.

The protein localises to the cytoplasm. It is found in the cytoskeleton. The catalysed reaction is GTP + H2O = GDP + phosphate + H(+). In terms of biological role, tubulin is the major constituent of microtubules, a cylinder consisting of laterally associated linear protofilaments composed of alpha- and beta-tubulin heterodimers. Microtubules grow by the addition of GTP-tubulin dimers to the microtubule end, where a stabilizing cap forms. Below the cap, tubulin dimers are in GDP-bound state, owing to GTPase activity of alpha-tubulin. The sequence is that of Tubulin alpha chain from Zymoseptoria tritici (Speckled leaf blotch fungus).